Here is a 490-residue protein sequence, read N- to C-terminus: Colicin-5 (490 aa).

Polar residues predominate over residues M1–S20. Disordered regions lie at residues M1–G29 and Q146–R171. Positions Q146–A170 are enriched in basic and acidic residues. The helical transmembrane segment at I447–I467 threads the bilayer.

It belongs to the channel forming colicin family.

The protein resides in the host membrane. Its function is as follows. This colicin is a channel-forming colicin. This class of transmembrane toxins depolarize the cytoplasmic membrane, leading to dissipation of cellular energy. In terms of biological role, colicins are polypeptide toxins produced by and active against E.coli and closely related bacteria. The protein is Colicin-5 (cfa) of Escherichia coli.